Reading from the N-terminus, the 202-residue chain is Phospholipase A2 inhibitor gamma subunit A (202 aa).

The first 19 residues, 1 to 19 (MKSLQIICLLFIFVARGSC), serve as a signal peptide directing secretion. 8 disulfides stabilise this stretch: Cys22-Cys47, Cys25-Cys32, Cys40-Cys68, Cys74-Cys95, Cys96-Cys101, Cys119-Cys144, Cys137-Cys166, and Cys170-Cys192. N-linked (GlcNAc...) asparagine glycosylation is present at Asn177.

It belongs to the CNF-like-inhibitor family. In terms of assembly, heterodimer of subunit A and subunit B. N-glycosylated. As to expression, expressed by the liver. Not expressed in esophagus, stomach, pancreas, spleen, gall bladder, small intestine, rectum, kidney, trachea, lung, testis and body fat.

The protein localises to the secreted. Inhibits the enzymatic activity of all phospholipase A2 (PA2) groups. The sequence is that of Phospholipase A2 inhibitor gamma subunit A from Elaphe quadrivirgata (Japanese four-lined ratsnake).